The primary structure comprises 730 residues: Translation factor GUF1 homolog, mitochondrial (730 aa).

Residues 106–289 form the tr-type G domain; that stretch reads ELIRNFCIIA…AVVVSIPPPK (184 aa). GTP is bound by residues 115-122, 182-186, and 236-239; these read AHVDHGKS, DTPGH, and NKID.

It belongs to the TRAFAC class translation factor GTPase superfamily. Classic translation factor GTPase family. LepA subfamily.

Its subcellular location is the mitochondrion inner membrane. The catalysed reaction is GTP + H2O = GDP + phosphate + H(+). Promotes mitochondrial protein synthesis. May act as a fidelity factor of the translation reaction, by catalyzing a one-codon backward translocation of tRNAs on improperly translocated ribosomes. Binds to mitochondrial ribosomes in a GTP-dependent manner. In Theileria annulata, this protein is Translation factor GUF1 homolog, mitochondrial.